We begin with the raw amino-acid sequence, 215 residues long: Methylosome subunit pICln (215 aa).

Disordered regions lie at residues 88 to 120 (GDPPQQAVNGRNGGGSEAEVDEGNGSDEHDEDD) and 160 to 215 (HPDS…DADE). 3 stretches are compositionally biased toward acidic residues: residues 105 to 120 (AEVDEGNGSDEHDEDD), 167 to 190 (DSEDSDPMQDAGGLEDEAMEEDDA), and 203 to 215 (LDDDEERFEDADE).

This sequence belongs to the pICln (TC 1.A.47) family. Component of the methylosome, a 20S complex containing at least CLNS1A/pICln, PRMT5/SKB1 and WDR77/MEP50; may mediate SNRPD1 and SNRPD3 methylation. Forms a 6S pICln-Sm complex composed of CLNS1A/pICln, SNRPD1, SNRPD2, SNRPE, SNRPF and SNRPG; ring-like structure where CLNS1A/pICln mimics additional Sm proteins and which is unable to assemble into the core snRNP.

It is found in the cytoplasm. The protein resides in the cytosol. It localises to the nucleus. Its subcellular location is the cytoskeleton. In terms of biological role, involved in both the assembly of spliceosomal snRNPs and the methylation of Sm proteins. Chaperone that regulates the assembly of spliceosomal U1, U2, U4 and U5 small nuclear ribonucleoproteins (snRNPs), the building blocks of the spliceosome, and thereby plays an important role in the splicing of cellular pre-mRNAs. Most spliceosomal snRNPs contain a common set of Sm proteins SNRPB, SNRPD1, SNRPD2, SNRPD3, SNRPE, SNRPF and SNRPG that assemble in a heptameric protein ring on the Sm site of the small nuclear RNA to form the core snRNP (Sm core). In the cytosol, the Sm proteins SNRPD1, SNRPD2, SNRPE, SNRPF and SNRPG are trapped in an inactive 6S pICln-Sm complex by the chaperone CLNS1A that controls the assembly of the core snRNP. Dissociation by the SMN complex of CLNS1A from the trapped Sm proteins and their transfer to an SMN-Sm complex triggers the assembly of core snRNPs and their transport to the nucleus. The chain is Methylosome subunit pICln (icln) from Drosophila melanogaster (Fruit fly).